We begin with the raw amino-acid sequence, 449 residues long: Exodeoxyribonuclease 7 large subunit (449 aa).

This sequence belongs to the XseA family. Heterooligomer composed of large and small subunits.

It is found in the cytoplasm. The catalysed reaction is Exonucleolytic cleavage in either 5'- to 3'- or 3'- to 5'-direction to yield nucleoside 5'-phosphates.. Bidirectionally degrades single-stranded DNA into large acid-insoluble oligonucleotides, which are then degraded further into small acid-soluble oligonucleotides. The protein is Exodeoxyribonuclease 7 large subunit of Salmonella agona (strain SL483).